A 468-amino-acid polypeptide reads, in one-letter code: Procollagen C-endopeptidase enhancer 1 (468 aa).

The N-terminal stretch at 1–24 is a signal peptide; the sequence is MLPAALTSLLGPFLLAWVLPLARG. A glycan (N-linked (GlcNAc...) asparagine) is linked at asparagine 28. 4 disulfides stabilise this stretch: cysteine 36–cysteine 62, cysteine 89–cysteine 111, cysteine 158–cysteine 185, and cysteine 212–cysteine 235. 2 CUB domains span residues 36-148 and 158-272; these read CGGD…YSGR and CGGR…YRTL. At threonine 41 the chain carries Phosphothreonine. Residue serine 49 is modified to Phosphoserine. Residues 271-341 are disordered; that stretch reads TLPRDAVEKE…VAPDAPSITC (71 aa). Basic and acidic residues predominate over residues 272–281; that stretch reads LPRDAVEKES. 2 disulfide bridges follow: cysteine 341-cysteine 409 and cysteine 356-cysteine 460. One can recognise an NTR domain in the interval 341–460; the sequence is CPKQYKRSGT…ILSNLSKRKC (120 aa). Asparagine 454 carries N-linked (GlcNAc...) asparagine glycosylation.

Interacts with EFEMP2. In terms of tissue distribution, expressed at highest levels in collagen-rich tissues, especially tendon. Also expressed in cornea and sterna.

Its subcellular location is the secreted. Binds to the C-terminal propeptide of type I procollagen and enhances procollagen C-proteinase activity. The polypeptide is Procollagen C-endopeptidase enhancer 1 (Pcolce) (Rattus norvegicus (Rat)).